The chain runs to 507 residues: MNSFPWLTIIVVFPILTGSLIFLLPHRGNKVMKWYTLCICILELLLTTYTFCYHFQLDDPLTQLTENYKWIHFFDFYWRLGIDGLSIGPILLTGFITTLATLAAWPVTRDAQLFHFLMLAMYSGQIGSFSSRDLLLFFLMWEFELIPVYLLLSMWGGKKRLYSATKFILYTAGGSIFLLIGVLGIGLYGSNEPTLNFETLANQSYPVALEVIFYVGFLIAFAVKLPIIPFHTWLPDTHGEAHYSTCMLLAGILLKMGAYGLVRINMELLPHAHCLFSPGLIIVGAIQIIYAASTSPGQLNLKKRIAYSSISHMGFIIIGIGSLSDTGLNGAILQIISHGFIGAALFFLAGTSYDRIRLLYLDEMGGMAIPLPKLFTMLSILSMASLALPGLSGFVAELLVFFGIITSQKYLLMPKILIAFLMAIGMILTPIYSLSMLRQMFYGYKLFNVPNYYFFDSGPRELFVSISLLLPIIGIGIYPDFVLSLSVEKVEAIISHFFFSIVFKKKE.

15 helical membrane passes run F4 to L24, L37 to L57, I87 to V107, A111 to S131, L134 to M154, F167 to L187, A208 to I228, H242 to V262, A272 to A292, I305 to D325, G330 to G350, L386 to T406, I416 to M436, L462 to V482, and L483 to F503.

The protein belongs to the complex I subunit 4 family.

It is found in the plastid. The protein resides in the chloroplast thylakoid membrane. The catalysed reaction is a plastoquinone + NADH + (n+1) H(+)(in) = a plastoquinol + NAD(+) + n H(+)(out). The enzyme catalyses a plastoquinone + NADPH + (n+1) H(+)(in) = a plastoquinol + NADP(+) + n H(+)(out). The polypeptide is NAD(P)H-quinone oxidoreductase chain 4, chloroplastic (ndhD) (Oenothera elata subsp. hookeri (Hooker's evening primrose)).